The primary structure comprises 422 residues: MSKKITSIRGMNDILPEQTGLWQWLEAKVGAVLASYGYQEIRMPIVEQTDLFKRSIGEVTDIVEKEMYTFDDRNGDSLTLRPEGTASCVRACEQHGLLYNQTQRLWYAGPMFRHERPQAGRYRQFHQIGVETFGMTGPDIDAEVILLTARLWKALGLEDKVVLELNSLGDSADRARYRDALVDYLKAHFDDLDGDSQKRLERSPLRVLDSKDTGTREVLKGAPQLADYLNDEAVAHFEGLKALLDASGIAYKVNPYLVRGLDYYGKTVFEWVTDALGAQGTVCAGGRYDGLVEQLGGKPTPAVGFAMGIERLILLIEQERPELSAPVDVYVMAMGDVLAPTMALSEHLRDALPGRAIQLHCGGGSFKSQMKKADRSGAAVGLIMGEDELASGVVTVKPLRGQGEQVQVAQGDVANAVTSFLE.

It belongs to the class-II aminoacyl-tRNA synthetase family. Homodimer.

It localises to the cytoplasm. It carries out the reaction tRNA(His) + L-histidine + ATP = L-histidyl-tRNA(His) + AMP + diphosphate + H(+). The protein is Histidine--tRNA ligase of Alcanivorax borkumensis (strain ATCC 700651 / DSM 11573 / NCIMB 13689 / SK2).